The following is a 237-amino-acid chain: UPF0173 metal-dependent hydrolase BOV_A0561 (237 aa).

This sequence belongs to the UPF0173 family.

This chain is UPF0173 metal-dependent hydrolase BOV_A0561, found in Brucella ovis (strain ATCC 25840 / 63/290 / NCTC 10512).